The primary structure comprises 114 residues: MVKFSKVLMLMVLAGTVSAAFAAEGDPMARAVFYGALAIGAGVAIGAAAGGGAAGLGNAIRGVLEGMARNPNMGPKLLTTMFIGMALIETFVLYALLIAIIFIFTGIFDSKAGF.

The next 2 helical transmembrane spans lie at 31 to 51 (AVFYGALAIGAGVAIGAAAGG) and 88 to 108 (IETFVLYALLIAIIFIFTGIF).

Belongs to the ATPase C chain family. In terms of assembly, F-type ATPases have 2 components, F(1) - the catalytic core - and F(0) - the membrane proton channel. F(1) has five subunits: alpha(3), beta(3), gamma(1), delta(1), epsilon(1). F(0) has three main subunits: a(1), b(2) and c(10-14). The alpha and beta chains form an alternating ring which encloses part of the gamma chain. F(1) is attached to F(0) by a central stalk formed by the gamma and epsilon chains, while a peripheral stalk is formed by the delta and b chains.

It is found in the cell inner membrane. Its function is as follows. F(1)F(0) ATP synthase produces ATP from ADP in the presence of a proton or sodium gradient. F-type ATPases consist of two structural domains, F(1) containing the extramembraneous catalytic core and F(0) containing the membrane proton channel, linked together by a central stalk and a peripheral stalk. During catalysis, ATP synthesis in the catalytic domain of F(1) is coupled via a rotary mechanism of the central stalk subunits to proton translocation. Functionally, key component of the F(0) channel; it plays a direct role in translocation across the membrane. A homomeric c-ring of between 10-14 subunits forms the central stalk rotor element with the F(1) delta and epsilon subunits. The protein is ATP synthase subunit c of Sulfurihydrogenibium sp. (strain YO3AOP1).